The primary structure comprises 733 residues: Phosphoribosylformylglycinamidine synthase subunit PurL (733 aa).

The active site involves histidine 32. Tyrosine 35 serves as a coordination point for ATP. Glutamate 81 lines the Mg(2+) pocket. Residues 82-85 (SHNH) and arginine 104 each bind substrate. Catalysis depends on histidine 83, which acts as the Proton acceptor. Aspartate 105 serves as a coordination point for Mg(2+). Glutamine 230 provides a ligand contact to substrate. Aspartate 258 lines the Mg(2+) pocket. Residue 301 to 303 (ESQ) coordinates substrate. ATP is bound by residues aspartate 482 and glycine 519. Residue asparagine 520 coordinates Mg(2+). A substrate-binding site is contributed by serine 522.

It belongs to the FGAMS family. In terms of assembly, monomer. Part of the FGAM synthase complex composed of 1 PurL, 1 PurQ and 2 PurS subunits.

It is found in the cytoplasm. The enzyme catalyses N(2)-formyl-N(1)-(5-phospho-beta-D-ribosyl)glycinamide + L-glutamine + ATP + H2O = 2-formamido-N(1)-(5-O-phospho-beta-D-ribosyl)acetamidine + L-glutamate + ADP + phosphate + H(+). Its pathway is purine metabolism; IMP biosynthesis via de novo pathway; 5-amino-1-(5-phospho-D-ribosyl)imidazole from N(2)-formyl-N(1)-(5-phospho-D-ribosyl)glycinamide: step 1/2. Part of the phosphoribosylformylglycinamidine synthase complex involved in the purines biosynthetic pathway. Catalyzes the ATP-dependent conversion of formylglycinamide ribonucleotide (FGAR) and glutamine to yield formylglycinamidine ribonucleotide (FGAM) and glutamate. The FGAM synthase complex is composed of three subunits. PurQ produces an ammonia molecule by converting glutamine to glutamate. PurL transfers the ammonia molecule to FGAR to form FGAM in an ATP-dependent manner. PurS interacts with PurQ and PurL and is thought to assist in the transfer of the ammonia molecule from PurQ to PurL. The protein is Phosphoribosylformylglycinamidine synthase subunit PurL of Methanocaldococcus jannaschii (strain ATCC 43067 / DSM 2661 / JAL-1 / JCM 10045 / NBRC 100440) (Methanococcus jannaschii).